We begin with the raw amino-acid sequence, 571 residues long: MRASKYLFSTLKETPHHAKIISHQLMLKSGMIRKLSSGIYIWLPTGIRVLNKIKDIIKNEMRKINALEVLMPVVQPKKLWENSGRLSIYGEELFQFYDRRNQKFILGPTNEEVVTNFIRNEINSFKELPLIIYQIQTKFRDEIRPRFGIVRSREFIMKDAYSFHINKHCLEKTYNDFYQSYINIFNKIKIQFRAVNADSGSMGGSISHEFQALSENGEDEIVFSKNTAYASNINTAKSMQSINFLKEKNRIIPNQIKSKKCTKNFNEFKKPIKNFIKTILVRTKINNQPSLAALLIRQEHELNLFKIEEIDIIEKPLSFVNEEEIITLMGVKSKFLGPLGLKIPIFADVSVYYMKDFTIGSNINEKFFINVNWNVDLPIPIIKDIRNITKKDISSDGSKSLEIKKSIEIGHIFQLGKEYSKKMNVLVQEQHNNYKHIHMGCYGIGITRIVASVIEQNYDDNGIIWPDSIAPFQVVILPLNTKNCIKIKEITENLYKILKKEKIDVILYDRNERPGIMFNQIDLIGIPHQIIISPRHINENKVEYRERKNNKSTLIKVKEITYFLKKKLNLI.

The protein belongs to the class-II aminoacyl-tRNA synthetase family. ProS type 1 subfamily. In terms of assembly, homodimer.

The protein localises to the cytoplasm. The enzyme catalyses tRNA(Pro) + L-proline + ATP = L-prolyl-tRNA(Pro) + AMP + diphosphate. In terms of biological role, catalyzes the attachment of proline to tRNA(Pro) in a two-step reaction: proline is first activated by ATP to form Pro-AMP and then transferred to the acceptor end of tRNA(Pro). As ProRS can inadvertently accommodate and process non-cognate amino acids such as alanine and cysteine, to avoid such errors it has two additional distinct editing activities against alanine. One activity is designated as 'pretransfer' editing and involves the tRNA(Pro)-independent hydrolysis of activated Ala-AMP. The other activity is designated 'posttransfer' editing and involves deacylation of mischarged Ala-tRNA(Pro). The misacylated Cys-tRNA(Pro) is not edited by ProRS. The protein is Proline--tRNA ligase of Buchnera aphidicola subsp. Schizaphis graminum (strain Sg).